A 157-amino-acid polypeptide reads, in one-letter code: Dihydrofolate reductase type 6 (157 aa).

The 155-residue stretch at 2–156 (KISLMAAVSE…IDYTYQIWAK (155 aa)) folds into the DHFR domain.

This sequence belongs to the dihydrofolate reductase family. In terms of assembly, homodimer.

It catalyses the reaction (6S)-5,6,7,8-tetrahydrofolate + NADP(+) = 7,8-dihydrofolate + NADPH + H(+). It functions in the pathway cofactor biosynthesis; tetrahydrofolate biosynthesis; 5,6,7,8-tetrahydrofolate from 7,8-dihydrofolate: step 1/1. Its function is as follows. Key enzyme in folate metabolism. Catalyzes an essential reaction for de novo glycine and purine synthesis, and for DNA precursor synthesis. The protein is Dihydrofolate reductase type 6 (dhfrVI) of Proteus mirabilis.